Reading from the N-terminus, the 463-residue chain is tRNA (guanine(10)-N(2))-methyltransferase TRMT11 (463 aa).

Residue alanine 2 is modified to N-acetylalanine.

This sequence belongs to the class I-like SAM-binding methyltransferase superfamily. TRM11 methyltransferase family. In terms of assembly, part of the heterodimeric TRMT11-TRM112 methyltransferase complex; this complex forms an active tRNA methyltransferase, where TRMT112 acts as an activator of the catalytic subunit TRMT11.

Its subcellular location is the cytoplasm. It catalyses the reaction guanosine(10) in tRNA + S-adenosyl-L-methionine = N(2)-methylguanosine(10) in tRNA + S-adenosyl-L-homocysteine + H(+). Its function is as follows. Catalytic subunit of the TRMT11-TRM112 methyltransferase complex, that specifically mediates the S-adenosyl-L-methionine-dependent N(2)-methylation of guanosine nucleotide at position 10 (m2G10) in tRNAs. This is one of the major tRNA (guanine-N(2))-methyltransferases. The polypeptide is tRNA (guanine(10)-N(2))-methyltransferase TRMT11 (Rattus norvegicus (Rat)).